Consider the following 404-residue polypeptide: Diaminopropionate ammonia-lyase (404 aa).

N6-(pyridoxal phosphate)lysine is present on Lys78.

The protein belongs to the diaminopropionate ammonia-lyase family. As to quaternary structure, homodimer. The cofactor is pyridoxal 5'-phosphate.

It carries out the reaction (S)-2,3-diaminopropanoate + H2O + H(+) = pyruvate + 2 NH4(+). It catalyses the reaction (R)-2,3-diaminopropanoate + H2O + H(+) = pyruvate + 2 NH4(+). Its activity is regulated as follows. Competitively inhibited by L- and D-alanine. Catalyzes the alpha,beta-elimination reaction of both L- and D-alpha,beta-diaminopropionate (DAP) to form pyruvate and ammonia. In vitro L- and D-isomers of serine are also degraded, though slowly; it is the only serine dehydratase which can eliminate an amino group at the beta-carbon position. In vivo L-, D- and a mixure of DL-DAP allow growth. DL-DAP is toxic in the absence of this enzyme, it may inhibit enzymes involved in the synthesis of pyruvate and aspartate, as well as amino acids derived from them. The protein is Diaminopropionate ammonia-lyase (dpaL) of Salmonella typhimurium (strain LT2 / SGSC1412 / ATCC 700720).